The following is a 147-amino-acid chain: Large ribosomal subunit protein uL13 (147 aa).

It belongs to the universal ribosomal protein uL13 family. In terms of assembly, part of the 50S ribosomal subunit.

Functionally, this protein is one of the early assembly proteins of the 50S ribosomal subunit, although it is not seen to bind rRNA by itself. It is important during the early stages of 50S assembly. This chain is Large ribosomal subunit protein uL13, found in Ligilactobacillus salivarius (strain UCC118) (Lactobacillus salivarius).